We begin with the raw amino-acid sequence, 151 residues long: Methylated-DNA--protein-cysteine methyltransferase (151 aa).

Residue C119 is the Nucleophile; methyl group acceptor of the active site.

Belongs to the MGMT family.

The protein localises to the cytoplasm. The enzyme catalyses a 6-O-methyl-2'-deoxyguanosine in DNA + L-cysteinyl-[protein] = S-methyl-L-cysteinyl-[protein] + a 2'-deoxyguanosine in DNA. The catalysed reaction is a 4-O-methyl-thymidine in DNA + L-cysteinyl-[protein] = a thymidine in DNA + S-methyl-L-cysteinyl-[protein]. In terms of biological role, involved in the cellular defense against the biological effects of O6-methylguanine (O6-MeG) and O4-methylthymine (O4-MeT) in DNA. Repairs the methylated nucleobase in DNA by stoichiometrically transferring the methyl group to a cysteine residue in the enzyme. This is a suicide reaction: the enzyme is irreversibly inactivated. This chain is Methylated-DNA--protein-cysteine methyltransferase, found in Saccharolobus islandicus (strain M.16.27) (Sulfolobus islandicus).